The chain runs to 208 residues: Large ribosomal subunit protein uL4 (208 aa).

The segment at 50-83 (VKTRAEVSGGGRKPWKQKGTGRARQGSIRAPQWK) is disordered.

Belongs to the universal ribosomal protein uL4 family. In terms of assembly, part of the 50S ribosomal subunit.

Functionally, one of the primary rRNA binding proteins, this protein initially binds near the 5'-end of the 23S rRNA. It is important during the early stages of 50S assembly. It makes multiple contacts with different domains of the 23S rRNA in the assembled 50S subunit and ribosome. In terms of biological role, forms part of the polypeptide exit tunnel. This chain is Large ribosomal subunit protein uL4, found in Mycoplasma capricolum subsp. capricolum (strain California kid / ATCC 27343 / NCTC 10154).